A 428-amino-acid chain; its full sequence is Putative ankyrin repeat protein FPV234 (428 aa).

ANK repeat units follow at residues 6–35 (KDDI…DPNV), 39–68 (YQYS…DPNI), 71–100 (FFTP…IVNL), 103–132 (YCLK…DINS), 137–169 (NGKY…DINK), 174–202 (TNTS…NINI), 206–238 (MGRN…DINA), and 242–271 (EGNT…YLSY).

The protein is Putative ankyrin repeat protein FPV234 of Fowlpox virus (strain NVSL) (FPV).